Reading from the N-terminus, the 684-residue chain is Acetophenone carboxylase delta subunit (684 aa).

The protein belongs to the oxoprolinase family. Acetophenone carboxylase consists of five subunits; a heterooctameric subcomplex of two alpha (Apc1), two beta (Apc2), two gamma (Apc3) and two delta (Apc4) subunits assembles with the epsilon (Apc5) subunit in an unknown stoichiometry. Mg(2+) serves as cofactor. The cofactor is Mn(2+).

It is found in the cytoplasm. It catalyses the reaction acetophenone + hydrogencarbonate + 2 ATP + H2O = 3-oxo-3-phenylpropanoate + 2 ADP + 2 phosphate + 2 H(+). With respect to regulation, inhibited by zinc ions, carbamoylphosphate and beta,gamma-imido-ATP. In terms of biological role, catalyzes the carboxylation of acetophenone to form 3-oxo-3-phenylpropanoate (benzoylacetate) in the anaerobic catabolism of ethylbenzene. Also carboxylates propiophenone at the same rate and 4-acetyl-pyridine at lower rates. The chain is Acetophenone carboxylase delta subunit (apc4) from Aromatoleum aromaticum (strain DSM 19018 / LMG 30748 / EbN1) (Azoarcus sp. (strain EbN1)).